An 819-amino-acid chain; its full sequence is uncharacterized protein (819 aa).

Residue serine 16 is modified to Phosphoserine. Disordered stretches follow at residues 28–83 (SNTQ…PPTV) and 96–134 (PTFT…ASKI). The segment at residues 36–63 (KIRFTENENDLSPERAQKEPVSIPHGRY) is a DNA-binding region (zn(2)-C6 fungal-type). Polar residues-rich tracts occupy residues 64–77 (TWST…SHLP) and 96–118 (PTFT…NDYI).

The protein localises to the nucleus. This is an uncharacterized protein from Schizosaccharomyces pombe (strain 972 / ATCC 24843) (Fission yeast).